The chain runs to 257 residues: Imidazole glycerol phosphate synthase subunit HisF (257 aa).

Residues aspartate 11 and aspartate 130 contribute to the active site.

Belongs to the HisA/HisF family. Heterodimer of HisH and HisF.

It is found in the cytoplasm. The catalysed reaction is 5-[(5-phospho-1-deoxy-D-ribulos-1-ylimino)methylamino]-1-(5-phospho-beta-D-ribosyl)imidazole-4-carboxamide + L-glutamine = D-erythro-1-(imidazol-4-yl)glycerol 3-phosphate + 5-amino-1-(5-phospho-beta-D-ribosyl)imidazole-4-carboxamide + L-glutamate + H(+). It participates in amino-acid biosynthesis; L-histidine biosynthesis; L-histidine from 5-phospho-alpha-D-ribose 1-diphosphate: step 5/9. IGPS catalyzes the conversion of PRFAR and glutamine to IGP, AICAR and glutamate. The HisF subunit catalyzes the cyclization activity that produces IGP and AICAR from PRFAR using the ammonia provided by the HisH subunit. The sequence is that of Imidazole glycerol phosphate synthase subunit HisF from Vibrio campbellii (strain ATCC BAA-1116).